A 667-amino-acid chain; its full sequence is Autophagy-related protein 20 (667 aa).

The segment at 1-94 is disordered; sequence MKQKKNRFGS…DESFKSTRAN (94 aa). The span at 38 to 47 shows a compositional bias: low complexity; it reads SSSSRSSSTQ. Residues 55–67 are compositionally biased toward polar residues; that stretch reads SLASVHTSDMHQS. Over residues 76-85 the composition is skewed to acidic residues; the sequence is DDNPFLDQDD. Residues 185–331 enclose the PX domain; it reads KLINDRVQIL…DFLDPNNINW (147 aa). A 1,2-diacyl-sn-glycero-3-phospho-(1D-myo-inositol-3-phosphate) contacts are provided by Arg-222, Ser-224, Lys-248, and Arg-297. Residues 524–562 form a disordered region; sequence ELQRGVQPRNGNTASGASGNDESSVKKPQASKSQSSSYG. Polar residues predominate over residues 532–545; that stretch reads RNGNTASGASGNDE. Residues 549–560 show a composition bias toward low complexity; it reads KKPQASKSQSSS. Residues 588-652 are a coiled coil; sequence QTTMANLIKE…SKYLKDYAKK (65 aa).

It belongs to the sorting nexin family.

It localises to the endosome membrane. Its subcellular location is the preautophagosomal structure membrane. Its function is as follows. Required for cytoplasm to vacuole transport (Cvt), pexophagy and mitophagy. Also involved in endoplasmic reticulum-specific autophagic process and is essential for the survival of cells subjected to severe ER stress. Functions in protein retrieval from the endocytic pathway. The sequence is that of Autophagy-related protein 20 (ATG20) from Vanderwaltozyma polyspora (strain ATCC 22028 / DSM 70294 / BCRC 21397 / CBS 2163 / NBRC 10782 / NRRL Y-8283 / UCD 57-17) (Kluyveromyces polysporus).